We begin with the raw amino-acid sequence, 513 residues long: Bone morphogenetic protein 6 (513 aa).

The N-terminal stretch at Met1–Ser20 is a signal peptide. A propeptide spanning residues Cys21–Arg374 is cleaved from the precursor. Disordered stretches follow at residues Ala38–Phe66, Leu89–Ser131, and Ala145–Leu200. The segment covering Gly98–Arg121 has biased composition (low complexity). Positions Gln158 to Arg172 are enriched in polar residues. Residues Asn241, Asn269, Asn386, Asn404, and Asn454 are each glycosylated (N-linked (GlcNAc...) asparagine). A disordered region spans residues Thr373–Ser398. 3 disulfides stabilise this stretch: Cys412/Cys478, Cys441/Cys510, and Cys445/Cys512.

The protein belongs to the TGF-beta family. Interacts with SOSTDC1. Interacts (when glycosylated) with type I receptor ACVR1; the interaction may induce HAMP expression. Interacts with type II receptor ACVR2B. Interacts with Hemojuvelin/HJV. Interacts with ERFE; the interaction inhibits BMP-induced transcription of HAMP. Interacts with BMPR1A/ALK3. Forms heterodimers with BMP2 in vitro; the heterodimer then binds to its receptor BMPR1A /ALK3 and may induce HAMP expression. Post-translationally, glycosylated at Asn-454. Glycosylation is crucial for recognition by the activin receptor type I/ACVR1.

The protein localises to the secreted. In terms of biological role, growth factor of the TGF-beta superfamily that plays essential roles in many developmental processes including cartilage and bone formation. Also plays an important role in the regulation of HAMP/hepcidin expression and iron metabolism by acting as a ligand for hemojuvelin/HJV. Also acts to promote expression of HAMP, potentially via the interaction with its receptor BMPR1A/ALK3. Initiates the canonical BMP signaling cascade by associating with type I receptor ACVR1 and type II receptor ACVR2B. In turn, ACVR1 propagates signal by phosphorylating SMAD1/5/8 that travel to the nucleus and act as activators and repressors of transcription of target. Can also signal through non-canonical pathway such as TAZ-Hippo signaling cascade to modulate VEGF signaling by regulating VEGFR2 expression. The protein is Bone morphogenetic protein 6 (BMP6) of Homo sapiens (Human).